The following is a 28-amino-acid chain: Grammistin Gs A (28 aa).

The protein belongs to the grammistin family. Group 3 subfamily. As to quaternary structure, exists as aggregates of 3-4 molecules. As to expression, expressed by the skin glands.

It is found in the secreted. Thanks to its amphiphilic alpha-helice(s), it may integrate into membrane phospholipids, leading to lysis of the membrane. Has no substantial hemolytic activity. Has antibacterial activity with a broad spectrum against various species of bacteria including both Gram-positive and Gram-negative groups. The sequence is that of Grammistin Gs A from Grammistes sexlineatus (Goldenstriped soapfish).